Reading from the N-terminus, the 228-residue chain is Small ribosomal subunit protein uS3 (228 aa).

The KH type-2 domain maps to 39–107 (VREYLQDKLK…PVHINIEEIR (69 aa)).

It belongs to the universal ribosomal protein uS3 family. In terms of assembly, part of the 30S ribosomal subunit. Forms a tight complex with proteins S10 and S14.

Binds the lower part of the 30S subunit head. Binds mRNA in the 70S ribosome, positioning it for translation. This is Small ribosomal subunit protein uS3 from Pseudomonas aeruginosa (strain UCBPP-PA14).